Here is a 98-residue protein sequence, read N- to C-terminus: Large ribosomal subunit protein uL23 (98 aa).

Belongs to the universal ribosomal protein uL23 family. As to quaternary structure, part of the 50S ribosomal subunit. Contacts protein L29, and trigger factor when it is bound to the ribosome.

In terms of biological role, one of the early assembly proteins it binds 23S rRNA. One of the proteins that surrounds the polypeptide exit tunnel on the outside of the ribosome. Forms the main docking site for trigger factor binding to the ribosome. The sequence is that of Large ribosomal subunit protein uL23 from Lactobacillus delbrueckii subsp. bulgaricus (strain ATCC 11842 / DSM 20081 / BCRC 10696 / JCM 1002 / NBRC 13953 / NCIMB 11778 / NCTC 12712 / WDCM 00102 / Lb 14).